Reading from the N-terminus, the 196-residue chain is ATP-dependent Clp protease proteolytic subunit (196 aa).

The active-site Nucleophile is the S96. The active site involves H121.

This sequence belongs to the peptidase S14 family. Fourteen ClpP subunits assemble into 2 heptameric rings which stack back to back to give a disk-like structure with a central cavity, resembling the structure of eukaryotic proteasomes.

The protein localises to the cytoplasm. It catalyses the reaction Hydrolysis of proteins to small peptides in the presence of ATP and magnesium. alpha-casein is the usual test substrate. In the absence of ATP, only oligopeptides shorter than five residues are hydrolyzed (such as succinyl-Leu-Tyr-|-NHMec, and Leu-Tyr-Leu-|-Tyr-Trp, in which cleavage of the -Tyr-|-Leu- and -Tyr-|-Trp bonds also occurs).. Functionally, cleaves peptides in various proteins in a process that requires ATP hydrolysis. Has a chymotrypsin-like activity. Plays a major role in the degradation of misfolded proteins. In Streptococcus mutans serotype c (strain ATCC 700610 / UA159), this protein is ATP-dependent Clp protease proteolytic subunit.